A 176-amino-acid polypeptide reads, in one-letter code: Large ribosomal subunit protein bL12m (176 aa).

This sequence belongs to the bacterial ribosomal protein bL12 family. As to quaternary structure, component of the mitochondrial large ribosomal subunit (mt-LSU). Mature N.crassa 74S mitochondrial ribosomes consist of a small (37S) and a large (54S) subunit. The 37S small subunit contains a 16S ribosomal RNA (16S mt-rRNA) and 32 different proteins. The 54S large subunit contains a 23S rRNA (23S mt-rRNA) and 42 different proteins.

The protein localises to the mitochondrion. In terms of biological role, component of the mitochondrial ribosome (mitoribosome), a dedicated translation machinery responsible for the synthesis of mitochondrial genome-encoded proteins, including at least some of the essential transmembrane subunits of the mitochondrial respiratory chain. The mitoribosomes are attached to the mitochondrial inner membrane and translation products are cotranslationally integrated into the membrane. This Neurospora crassa (strain ATCC 24698 / 74-OR23-1A / CBS 708.71 / DSM 1257 / FGSC 987) protein is Large ribosomal subunit protein bL12m (mrpl12).